We begin with the raw amino-acid sequence, 291 residues long: tRNA U34 carboxymethyltransferase (291 aa).

Carboxy-S-adenosyl-L-methionine is bound by residues Lys61, Trp75, Lys80, Gly100, 122–124, 149–150, Tyr169, and Arg284; these read DPS and VE.

It belongs to the class I-like SAM-binding methyltransferase superfamily. CmoB family. In terms of assembly, homotetramer.

It catalyses the reaction carboxy-S-adenosyl-L-methionine + 5-hydroxyuridine(34) in tRNA = 5-carboxymethoxyuridine(34) in tRNA + S-adenosyl-L-homocysteine + H(+). Functionally, catalyzes carboxymethyl transfer from carboxy-S-adenosyl-L-methionine (Cx-SAM) to 5-hydroxyuridine (ho5U) to form 5-carboxymethoxyuridine (cmo5U) at position 34 in tRNAs. The sequence is that of tRNA U34 carboxymethyltransferase from Campylobacter jejuni subsp. jejuni serotype O:2 (strain ATCC 700819 / NCTC 11168).